The primary structure comprises 87 residues: Small ribosomal subunit protein uS15c (87 aa).

Belongs to the universal ribosomal protein uS15 family. As to quaternary structure, part of the 30S ribosomal subunit.

Its subcellular location is the plastid. It localises to the chloroplast. The protein is Small ribosomal subunit protein uS15c (rps15) of Solanum lycopersicum (Tomato).